Consider the following 139-residue polypeptide: Maximins 4/H3 type 7 (139 aa).

The N-terminal stretch at 1–18 is a signal peptide; that stretch reads MNFKYIVAVSFLIASAYA. The propeptide occupies 19–43; it reads RSVQNDEQSLSQRDVLEEESLREIR. At asparagine 70 the chain carries Asparagine amide. Positions 74-118 are excised as a propeptide; the sequence is TAEDHEVMKRLEAIMRDLDSLDYPEEASERETRGFNQDEIAKEKR. Residue isoleucine 138 is modified to Isoleucine amide.

The protein belongs to the bombinin family. Expressed by the skin glands.

The protein resides in the secreted. In terms of biological role, maximin-4 shows antibacterial activity against both Gram-positive and Gram-negative bacteria. It also shows antimicrobial activity against the fungus C.albicans, but not against A.flavus nor P.uticale. It has little hemolytic activity. It does not possess a significant cytotoxicity against tumor cell lines. It does not possess a significant anti-HIV activity. Its function is as follows. Maximin-H3 shows antibacterial activity against both Gram-positive and Gram-negative bacteria. It also shows antimicrobial activity against the fungus C.albicans. Shows strong hemolytic activity. The sequence is that of Maximins 4/H3 type 7 from Bombina maxima (Giant fire-bellied toad).